The following is a 260-amino-acid chain: MTRHWPWEVSLRMENEHVCGGALIDPSWVVTAAHCIQGTKEYSVVLGTSKLQPMNFSRALWVPVRDIIMHPKYWGRAFIMGDVALVHLQTPVTFSEYVQPICLPEPNFNLKVGTQCWVTGWSQVKQRFSANSMLTPELQEAEVFIMDNKRCDRHYKKSFFPPVVPLVLGDMICATNYGENLCYGDSGGPLACEVEGRWILAGVLSWEKACVKAQNPGVYTRITKYTKWIKKQMSNGAFSGPCASACLLFLCWLLQPQMGS.

A Peptidase S1 domain is found at Met1–Ser234. Cys19 and Cys35 are disulfide-bonded. His34 functions as the Charge relay system in the catalytic mechanism. An N-linked (GlcNAc...) asparagine glycan is attached at Asn55. The active-site Charge relay system is the Asp82. 3 disulfide bridges follow: Cys116-Cys192, Cys151-Cys173, and Cys182-Cys210. Catalysis depends on Ser186, which acts as the Charge relay system.

This sequence belongs to the peptidase S1 family.

The sequence is that of Putative serine protease 45 from Homo sapiens (Human).